Reading from the N-terminus, the 461-residue chain is GTPase Der (461 aa).

2 EngA-type G domains span residues 25-188 (PVVA…PNVA) and 198-371 (RRVA…ASWD). GTP contacts are provided by residues 31–38 (GRPNVGKS), 78–82 (DTGGW), 140–143 (NKVD), 204–211 (GKPNVGKS), 251–255 (DTAGL), and 316–319 (NKWD). Residues 372 to 454 (TRIATGPLNI…PIRINVRVRE (83 aa)) form the KH-like domain.

It belongs to the TRAFAC class TrmE-Era-EngA-EngB-Septin-like GTPase superfamily. EngA (Der) GTPase family. In terms of assembly, associates with the 50S ribosomal subunit.

In terms of biological role, GTPase that plays an essential role in the late steps of ribosome biogenesis. This Mycobacterium leprae (strain TN) protein is GTPase Der.